The primary structure comprises 422 residues: Ornithine decarboxylase (422 aa).

K71 carries the post-translational modification N6-(pyridoxal phosphate)lysine. Pyridoxal 5'-phosphate contacts are provided by residues S203, G240, and 275-278 (EPGR). Residue 331-332 (FD) coordinates substrate. The active-site Proton donor; shared with dimeric partner is C359. D360 is a substrate binding site. Y388 serves as a coordination point for pyridoxal 5'-phosphate.

It belongs to the Orn/Lys/Arg decarboxylase class-II family. Homodimer. Only the dimer is catalytically active, as the active sites are constructed of residues from both monomers. Requires pyridoxal 5'-phosphate as cofactor.

It catalyses the reaction L-ornithine + H(+) = putrescine + CO2. Its pathway is amine and polyamine biosynthesis; putrescine biosynthesis via L-ornithine pathway; putrescine from L-ornithine: step 1/1. Inhibited by antizyme (AZ) in response to polyamine levels. AZ inhibits the assembly of the functional homodimer by binding to ODC monomers and targeting them for ubiquitin-independent proteolytic destruction by the 26S proteasome. Its function is as follows. Catalyzes the first and rate-limiting step of polyamine biosynthesis that converts ornithine into putrescine, which is the precursor for the polyamines, spermidine and spermine. Polyamines are essential for cell proliferation and are implicated in cellular processes, ranging from DNA replication to apoptosis. In Caenorhabditis elegans, this protein is Ornithine decarboxylase.